Here is a 276-residue protein sequence, read N- to C-terminus: Large ribosomal subunit protein uL2 (276 aa).

The interval 221-276 (RGSAMNPNDHPHGGGEGRAPIGRKSPMTPWGKKARGVKTRDRKKASNALIIRRRTK) is disordered. Residues 252 to 276 (KKARGVKTRDRKKASNALIIRRRTK) are compositionally biased toward basic residues.

It belongs to the universal ribosomal protein uL2 family. In terms of assembly, part of the 50S ribosomal subunit. Forms a bridge to the 30S subunit in the 70S ribosome.

In terms of biological role, one of the primary rRNA binding proteins. Required for association of the 30S and 50S subunits to form the 70S ribosome, for tRNA binding and peptide bond formation. It has been suggested to have peptidyltransferase activity; this is somewhat controversial. Makes several contacts with the 16S rRNA in the 70S ribosome. The protein is Large ribosomal subunit protein uL2 of Aster yellows phytoplasma.